We begin with the raw amino-acid sequence, 238 residues long: uncharacterized protein (238 aa).

The next 3 membrane-spanning stretches (helical) occupy residues 19 to 39 (IVIE…FQII), 79 to 99 (IILF…AEFI), and 141 to 161 (YVEI…LIKC).

The protein resides in the cell membrane. This is an uncharacterized protein from Methanocaldococcus jannaschii (strain ATCC 43067 / DSM 2661 / JAL-1 / JCM 10045 / NBRC 100440) (Methanococcus jannaschii).